The sequence spans 205 residues: Large ribosomal subunit protein uL4 (205 aa).

The disordered stretch occupies residues 56–78; the sequence is VSGTTAKPYRQKHTGRARQGSLR.

Belongs to the universal ribosomal protein uL4 family. As to quaternary structure, part of the 50S ribosomal subunit.

In terms of biological role, one of the primary rRNA binding proteins, this protein initially binds near the 5'-end of the 23S rRNA. It is important during the early stages of 50S assembly. It makes multiple contacts with different domains of the 23S rRNA in the assembled 50S subunit and ribosome. Its function is as follows. Forms part of the polypeptide exit tunnel. The protein is Large ribosomal subunit protein uL4 of Ehrlichia ruminantium (strain Gardel).